The chain runs to 607 residues: UvrABC system protein C (607 aa).

Positions 16–94 constitute a GIY-YIG domain; the sequence is GRPGVYRMFD…IKEWRPPYNI (79 aa). Residues 203–238 form the UVR domain; it reads NALSDELNATMEKAAMALDFERAAELRDQVALLRRV.

Belongs to the UvrC family. As to quaternary structure, interacts with UvrB in an incision complex.

It is found in the cytoplasm. In terms of biological role, the UvrABC repair system catalyzes the recognition and processing of DNA lesions. UvrC both incises the 5' and 3' sides of the lesion. The N-terminal half is responsible for the 3' incision and the C-terminal half is responsible for the 5' incision. The chain is UvrABC system protein C from Pseudomonas savastanoi pv. phaseolicola (strain 1448A / Race 6) (Pseudomonas syringae pv. phaseolicola (strain 1448A / Race 6)).